A 580-amino-acid polypeptide reads, in one-letter code: Frizzled-10-B (580 aa).

A signal peptide spans 1 to 20 (MEPRVVTALLLSLAAALCSG). Residues 21 to 224 (ISSINPDRSG…DVYWSKNDKK (204 aa)) are Extracellular-facing. Residues 29–150 (SGEGRCQAIE…NDPNYLCMEA (122 aa)) enclose the FZ domain. 5 cysteine pairs are disulfide-bonded: Cys-34/Cys-95, Cys-42/Cys-88, Cys-79/Cys-117, Cys-106/Cys-147, and Cys-110/Cys-134. Residue Asn-48 is glycosylated (N-linked (GlcNAc...) asparagine). A glycan (N-linked (GlcNAc...) asparagine) is linked at Asn-153. Residues 173–194 (RPNSGHEMYPKDPKGRSSCENS) are disordered. Residues 180–189 (MYPKDPKGRS) show a composition bias toward basic and acidic residues. A helical membrane pass occupies residues 225-245 (FAFIWIAIWSLLCFFSSAFTV). The Cytoplasmic portion of the chain corresponds to 246-261 (LTFLVDPLRFKYPERP). Residues 262 to 282 (IIFLSMCYCVYSVGYIIRLFA) form a helical membrane-spanning segment. At 283–309 (GADSIACDRDSGQLYVIQEGLESTGCT) the chain is on the extracellular side. A helical transmembrane segment spans residues 310–330 (IVFLILYYFGMASSLWWVILT). At 331–350 (LTWFLAAGKKWGHEAIEANS) the chain is on the cytoplasmic side. A helical transmembrane segment spans residues 351–371 (SYFHLAAWAIPAVKTIMILVM). Over 372-392 (RRVAGDELTGVCYVGSMDVNA) the chain is Extracellular. The chain crosses the membrane as a helical span at residues 393–413 (LTGFVLIPLACYLIIGTSFIL). Topologically, residues 414–442 (SGFVALFHIRRVMKTGGENTDKLEKLMVR) are cytoplasmic. The helical transmembrane segment at 443–463 (IGVFSVLYTVPATCVIACYFY) threads the bilayer. Residues 464–501 (ERLNMDFWKILATQDKCKMDSQTKTLDCTMTSSIPAVE) lie on the Extracellular side of the membrane. A helical transmembrane segment spans residues 502–522 (IFMVKIFMLLVVGITSGMWIW). Over 523–580 (TSKTVQSWQNVFSKSLKKRNRNKPASVITSAGIYKKPQQPPKIHHGKYESALRSPTCV) the chain is Cytoplasmic. The Lys-Thr-X-X-X-Trp motif, mediates interaction with the PDZ domain of Dvl family members motif lies at 525-530 (KTVQSW). Residues 558 to 580 (KPQQPPKIHHGKYESALRSPTCV) are disordered. The short motif at 578–580 (TCV) is the PDZ-binding element.

The protein belongs to the G-protein coupled receptor Fz/Smo family. In terms of tissue distribution, expressed in liver, lung, brain, testis, heart and ovary.

Its subcellular location is the cell membrane. Receptor for Wnt proteins. Most of frizzled receptors are coupled to the beta-catenin canonical signaling pathway, which leads to the activation of disheveled proteins, inhibition of GSK-3 kinase, nuclear accumulation of beta-catenin and activation of Wnt target genes. A second signaling pathway involving PKC and calcium fluxes has been seen for some family members, but it is not yet clear if it represents a distinct pathway or if it can be integrated in the canonical pathway, as PKC seems to be required for Wnt-mediated inactivation of GSK-3 kinase. Both pathways seem to involve interactions with G-proteins. May be involved in transduction and intercellular transmission of polarity information during tissue morphogenesis and/or in differentiated tissues. Activated by Wnt8. Could have an antagonizing activity in the morphogenesis during development. The polypeptide is Frizzled-10-B (fzd10-b) (Xenopus laevis (African clawed frog)).